The following is a 496-amino-acid chain: MRKCFFMSHNPEEKQSNLDSNHKNESSSNKRIKFKTWQFILLLLGVVIITAGITVAATIGISHKISGLTKDERQEIKKIEYAYKTLNNDYYKKQNAGKLSEAAIDGMVKELKDPYSEYMTKDETKSFNEDVSGDFVGIGAEMQKKDKQIMITSPMKDSPAEKAGIQPKDVVTKVDGKSVVGKPLDQVVKLVRGKEGTTVKLTIKRGSQEKEIKIKRGKIHVKSVEYKKKDNIGVFTINKFQDNTAGELKSAIIKAHKDGVRSIVLDLRNNPGGLLDEAVKMANIFIDKDQTVVKLEKGDDTESIKTSNDASNEAKDMKVSILVNEGSASASEVFTGAMRDHKKAKVYGSKTFGKGIVQTTREFKDGSLLKYTQMKWLTPDGHNIHGKGIQPDTKIASPQYQSISVIPTDKSYSVGDNTKYVKSIKIGLDALGYNVNNDSKQFDTQLESAIKKFQSEHELSVNGKFDKKTNEKFTQLLVEKANKEDKVLDELINKLK.

A disordered region spans residues 1–26; sequence MRKCFFMSHNPEEKQSNLDSNHKNES. Residues 10 to 25 are compositionally biased toward basic and acidic residues; that stretch reads NPEEKQSNLDSNHKNE. A helical membrane pass occupies residues 39-59; the sequence is FILLLLGVVIITAGITVAATI. One can recognise a PDZ domain in the interval 124 to 206; the sequence is TKSFNEDVSG…TTVKLTIKRG (83 aa). Active-site charge relay system residues include serine 329, aspartate 340, and lysine 354.

Belongs to the peptidase S41A family.

The protein resides in the cell membrane. This Staphylococcus haemolyticus (strain JCSC1435) protein is Probable CtpA-like serine protease.